Here is a 630-residue protein sequence, read N- to C-terminus: MSRSGDRTSTFDPSHSDNLLHGLNLLWRKQLFCDVTLTAQGQQFHCHKAVLASCSQYFRSLFSSHPPLGGGVGGQDGLGAPKDQQQQQQPQQQPPQQQQPPPQEEPGTPSSSPDDKLLTSPRAINNLVLQGCSSIGLRLVLEYLYTANVTLSLDTVEEVLSVSKILHIPQVTKLCVQFLNDQISVQNYKQVCKIAALHGLEETKKLANKYLVEDVLLLNFEEMRALLDSLPPPVESELALFQMSVLWLEHDRETRMQYAPDLMKRLRFALIPAPELVERVQSVDFMRTDPVCQKLLLDAMNYHLMPFRQHCRQSLASRIRSNKKMLLLVGGLPPGPDRLPSNLVQYYDDEKKTWKILTIMPYNSAHHCVVEVENFLFVLGGEDQWNPNGKHSTNFVSRYDPRFNSWIQLPPMQERRASFYACRLDKHLYVIGGRNETGYLSSVECYNLDTNEWRYVSSLPQPLAAHAGAVHNGKIYISGGVHNGEYVPWLYCYDPVMDVWARKQDMNTKRAIHTLAVMNDRLYAIGGNHLKGFSHLDVMLVECYDPKGDQWNILQTPILEGRSGPGCAVLDDSIYLVGGYSWSMGAYKSSTICYCPEKGTWTELEGDVAEPLAGPACATVILPACVPYNK.

Residues 33 to 153 form the BTB domain; that stretch reads CDVTLTAQGQ…LYTANVTLSL (121 aa). The segment at 69–117 is disordered; sequence GGGVGGQDGLGAPKDQQQQQQPQQQPPQQQQPPPQEEPGTPSSSPDDKL. Low complexity predominate over residues 84–96; that stretch reads QQQQQQPQQQPPQ. The region spanning 212–281 is the BACK domain; that stretch reads VEDVLLLNFE…PAPELVERVQ (70 aa). Kelch repeat units lie at residues 325-374, 375-426, 427-473, 475-520, 522-572, and 574-622; these read MLLL…EVEN, FLFV…RLDK, HLYV…VHNG, IYIS…VMND, LYAI…VLDD, and IYLV…TVIL.

In terms of assembly, interacts with TOR1A. In terms of tissue distribution, expressed in the brain, primarily in neurons. In the cerebral cortex, mostly expressed in layers I and II (at protein level). Also observed in some neurons of the corpus striatum (at protein level). Expressed at high levels in the hippocampus, including in pyramidal cells of the CA1 and CA3 layers (at protein level). In the cerebellum, expression in Purkinje cells is higher than in granular cells (at protein level). Also detected in the medial septum, ventral pallidum, thalamus, hypothalamus, amygdala, inferior colliculi, locus caeruleus, peripyramidal nucleus, raphe nucleus, reticular formation, spinal trigeminal nucleus, and vestibular nuclei (at protein level). Low expression, if any, in glial cells (at protein level). Not observed in the corpus callosum.

The protein localises to the cytoplasm. The protein resides in the cytosol. It localises to the endoplasmic reticulum membrane. In Mus musculus (Mouse), this protein is Kelch-like protein 14 (Klhl14).